The chain runs to 111 residues: Anti-adapter protein IraM (111 aa).

The protein belongs to the IraM/RssC family.

The protein localises to the cytoplasm. Involved in the stabilization of the sigma stress factor RpoS. In Cronobacter sakazakii (strain ATCC BAA-894) (Enterobacter sakazakii), this protein is Anti-adapter protein IraM.